A 293-amino-acid polypeptide reads, in one-letter code: N(1)-aminopropylagmatine ureohydrolase (293 aa).

Residues H105, D128, H130, D132, D210, and D212 each coordinate Mn(2+).

Belongs to the arginase family. Requires Mn(2+) as cofactor.

It catalyses the reaction N(1)-(3-aminopropyl)agmatine + H2O = urea + spermidine. Its pathway is amine and polyamine biosynthesis; spermidine biosynthesis. Involved in the biosynthesis of polyamines which are thought to support the growth of thermophilic microorganisms under high-temperature conditions. It seems that long-chain and branched-chain of polyamines effectively stabilize DNA and RNA, respectively. Catalyzes the decarboxylation of N1-(3-aminopropyl)agmatine to yield spermidine and urea. Does not act on agmatine. The polypeptide is N(1)-aminopropylagmatine ureohydrolase (Thermus thermophilus (strain ATCC BAA-163 / DSM 7039 / HB27)).